Reading from the N-terminus, the 957-residue chain is MEGFWNSKSIIRITLSFIFLFICHFLDVLAAPTRNLCRPEQRDALLAFKNEFEIGKPSPDHCKIYGIESPRKTDSWGNNSDCCNWEGVTCNAKSGEVIELDLSCSSLHGRFHSNSSIRNLHFLTTLDLSFNDFKGQITSSIENLSHLTYLDLSSNHFSGQILNSIGNLSRLTYLNLFDNQFSGQAPSSICNLSHLTFLDLSYNRFFGQFPSSIGGLSHLTTLSLFSNKFSGQIPSSIGNLSNLTTLDLSNNNFSGQIPSFIGNLSQLTFLGLFSNNFVGEIPSSFGNLNQLTRLYVDDNKLSGNFPNVLLNLTGLSLLSLSNNKFTGTLPPNITSLSNLMDFDASDNAFTGTFPSFLFTIPSLTYIRLNGNQLKGTLEFGNISSPSNLYELDIGNNNFIGPIPSSISKLVKLFRLDISHLNTQGPVDFSIFSHLKSLLDLNISHLNTTTRIDLNYFLSYFKRLLLLDLSGNHVSATNKSSVSDPPSQLIQSLYLSGCGITEFPEFVRTQHELGFLDISNNKIKGQVPDWLWRLPILYYVNLSNNTLIGFQRPSKPEPSLLYLLGSNNNFIGKIPSFICGLRSLNTLDLSDNNFNGSIPRCMGHLKSTLSVLNLRQNHLSGGLPKQIFEILRSLDVGHNQLVGKLPRSLSFFSTLEVLNVESNRINDTFPFWLSSLPKLQVLVLRSNAFHGPIHEATFPELRIIDISHNRFNGTLPTEYFVKWSAMSSLGKNEDQSNEKYMGSGLYYQDSMVLMNKGVAMELVRILTIYTAVDFSGNRFEGEIPKSIGLLKELLVLSLSNNAFSGHMPSSMGNLTALESLDVSKNKLTGEIPQELGDLSFLAYMNFSHNQLAGLVPGGQQFLTQNCSAFEDNLGLFGSSLEEVCRDIHTPASHQQFETPETEEEDEDLISWIAAAIGFGPGIAFGLMFGYILVSYKPEWFMNPFDRNNRRQKRHKTTH.

Positions 1-30 (MEGFWNSKSIIRITLSFIFLFICHFLDVLA) are cleaved as a signal peptide. At 31–910 (APTRNLCRPE…EEEDEDLISW (880 aa)) the chain is on the extracellular side. N-linked (GlcNAc...) asparagine glycosylation is found at asparagine 78, asparagine 114, asparagine 143, asparagine 167, and asparagine 191. 12 LRR repeats span residues 120 to 143 (LHFLTTLDLSFNDFKGQITSSIEN), 144 to 170 (LSHLTYLDLSSNHFSGQILNSIGNLSR), 172 to 192 (TYLNLFDNQFSGQAPSSICNL), 193 to 216 (SHLTFLDLSYNRFFGQFPSSIGGL), 217 to 240 (SHLTTLSLFSNKFSGQIPSSIGNL), 241 to 266 (SNLTTLDLSNNNFSGQIPSFIGNLSQ), 268 to 287 (TFLGLFSNNFVGEIPSSFGN), 288 to 312 (LNQLTRLYVDDNKLSGNFPNVLLNL), 313 to 336 (TGLSLLSLSNNKFTGTLPPNITSL), 338 to 360 (NLMDFDASDNAFTGTFPSFLFTI), 361 to 384 (PSLTYIRLNGNQLKGTLEFGNISS), and 386 to 409 (SNLYELDIGNNNFIGPIPSSISKL). Asparagine 239, asparagine 242, asparagine 252, and asparagine 263 each carry an N-linked (GlcNAc...) asparagine glycan. Asparagine 311 and asparagine 332 each carry an N-linked (GlcNAc...) asparagine glycan. Residue asparagine 381 is glycosylated (N-linked (GlcNAc...) asparagine). The LRR 13; degenerate repeat unit spans residues 412–433 (LFRLDISHLNTQGPVDFSIFSH). LRR repeat units lie at residues 434-458 (LKSLLDLNISHLNTTTRIDLNYFLS), 460-483 (FKRLLLLDLSGNHVSATNKSSVSD), 486-509 (SQLIQSLYLSGCGITEFPEFVRTQ), 510-533 (HELGFLDISNNKIKGQVPDWLWRL), 535-556 (ILYYVNLSNNTLIGFQRPSKPE), 558-580 (SLLYLLGSNNNFIGKIPSFICGL), 581-604 (RSLNTLDLSDNNFNGSIPRCMGHL), 605-629 (KSTLSVLNLRQNHLSGGLPKQIFEI), 631-651 (RSLDVGHNQLVGKLPRSLSFF), 652-674 (STLEVLNVESNRINDTFPFWLSS), 675-697 (LPKLQVLVLRSNAFHGPIHEATF), 698-721 (PELRIIDISHNRFNGTLPTEYFVK), 765-789 (LTIYTAVDFSGNRFEGEIPKSIGLL), 790-813 (KELLVLSLSNNAFSGHMPSSMGNL), 814-837 (TALESLDVSKNKLTGEIPQELGDL), and 839-862 (FLAYMNFSHNQLAGLVPGGQQFLT). Residues asparagine 441, asparagine 446, and asparagine 477 are each glycosylated (N-linked (GlcNAc...) asparagine). N-linked (GlcNAc...) asparagine glycosylation is found at asparagine 540 and asparagine 543. The N-linked (GlcNAc...) asparagine glycan is linked to asparagine 594. N-linked (GlcNAc...) asparagine glycosylation occurs at asparagine 665. Residue asparagine 711 is glycosylated (N-linked (GlcNAc...) asparagine). The N-linked (GlcNAc...) asparagine glycan is linked to asparagine 812. 2 N-linked (GlcNAc...) asparagine glycosylation sites follow: asparagine 844 and asparagine 864. A helical transmembrane segment spans residues 911–931 (IAAAIGFGPGIAFGLMFGYIL). Topologically, residues 932–957 (VSYKPEWFMNPFDRNNRRQKRHKTTH) are cytoplasmic.

Belongs to the RLP family.

Its subcellular location is the cell membrane. This chain is Receptor-like protein 53, found in Arabidopsis thaliana (Mouse-ear cress).